The following is a 403-amino-acid chain: Accessory Sec system protein translocase subunit SecY2 (403 aa).

10 helical membrane passes run 17-37, 63-83, 105-125, 131-151, 157-177, 186-206, 240-260, 276-296, 339-359, and 366-386; these read MLYT…SIVS, LNIF…LMLI, ILTL…YVSK, DNIY…VWLA, YGIA…MMHQ, HIVI…LLFI, ITLM…HFIL, FDSP…GYFL, WFGL…TLFV, and IYFS…AETI.

It belongs to the SecY/SEC61-alpha family. SecY2 subfamily. May form heterotrimers with SecE and SecG subunits (Potential). Component of the accessory SecA2/SecY2 protein translocase complex required to export cell wall protein SrpA.

Its subcellular location is the cell membrane. Its function is as follows. The central subunit of a protein translocation channel (Potential). Part of the accessory SecA2/SecY2 system specifically required to export SraP, a serine-rich repeat cell wall protein encoded upstream in the same operon. This Staphylococcus aureus (strain NCTC 8325 / PS 47) protein is Accessory Sec system protein translocase subunit SecY2.